A 691-amino-acid chain; its full sequence is Dipeptidyl peptidase 3 (691 aa).

Residue H431 coordinates Zn(2+). E432 is an active-site residue. Positions 436 and 492 each coordinate Zn(2+).

This sequence belongs to the peptidase M49 family. It depends on Zn(2+) as a cofactor.

Its subcellular location is the cytoplasm. It carries out the reaction Release of an N-terminal dipeptide from a peptide comprising four or more residues, with broad specificity. Also acts on dipeptidyl 2-naphthylamides.. In Dictyostelium discoideum (Social amoeba), this protein is Dipeptidyl peptidase 3 (dpp3-1).